Here is a 444-residue protein sequence, read N- to C-terminus: MAKKYFGTDGVRGEVGQFPITPDFVLKLGYAAGQVLVQHDTDQKPTVLIGKDTRISGYMLEAALVAGFTAAGVNVVQTGPLPTPGVAYLTRALRLSAGVMISASHNAYSDNGIKFFAEGGVKLSDEVELEIEAKIDGEMKTLPSARLGRARRISGADDRYIEFCKSTFPSHSDLRGLKLVIDTANGAGYGVAPKVFHELGAQVVSIGDEPNGYNINEKCGATYTKTLQAAVLQHEADYGIALDGDGDRLMMVDKNGKVYDGDSLIYVIAKARAREGINIGGVVGTVMTNMAMEIALKEQGVDFCRAKVGDRYVLAQLNQRSWLIGGEASGHILCMDKHNTGDGIISALQVLAALQTLNQDLATVCADWQPYPQTMINVRIQKGQKWQEASKDVLAEVEKELEGKGRVVLRASGTEPVVRVMVEARQADWARDGAERIASAIGSL.

Catalysis depends on serine 104, which acts as the Phosphoserine intermediate. Mg(2+)-binding residues include serine 104, aspartate 243, aspartate 245, and aspartate 247. At serine 104 the chain carries Phosphoserine.

Belongs to the phosphohexose mutase family. The cofactor is Mg(2+). Activated by phosphorylation.

The enzyme catalyses alpha-D-glucosamine 1-phosphate = D-glucosamine 6-phosphate. In terms of biological role, catalyzes the conversion of glucosamine-6-phosphate to glucosamine-1-phosphate. The polypeptide is Phosphoglucosamine mutase (Neisseria meningitidis serogroup C / serotype 2a (strain ATCC 700532 / DSM 15464 / FAM18)).